Consider the following 104-residue polypeptide: MVRKAFKMQLFEGQAKEYEKRHNELWPEMKEMIHEYGGSNYTIFLDEETNVLYGYIELEDEEKWDKTAETEICKKWWAFMADIMETNPDNSPVSVSLKNVFHLD.

Tyrosine 18 provides a ligand contact to substrate. Residue histidine 22 is the Proton donor of the active site. Substrate contacts are provided by residues tyrosine 41 and 76-77; that span reads WW.

It belongs to the rhamnose mutarotase family. In terms of assembly, homodimer.

The protein localises to the cytoplasm. It carries out the reaction alpha-L-rhamnose = beta-L-rhamnose. Its pathway is carbohydrate metabolism; L-rhamnose metabolism. In terms of biological role, involved in the anomeric conversion of L-rhamnose. This Lachnoclostridium phytofermentans (strain ATCC 700394 / DSM 18823 / ISDg) (Clostridium phytofermentans) protein is L-rhamnose mutarotase.